A 367-amino-acid chain; its full sequence is MDHVKLVNDPIDIAHIHQLLADAGCGASSVFVGTTRDNFQGKKVVSLAYEAYDSMALKEMNKICLDLRSKWPDLKHIVIYHRLGTVPVCEASVVIAASSPHRSEALESVSFAIDQLKTRVPIWKKEIYEGDHVSEWKENKESIRPKRSKSAFNYAACPCKVEESHDVPRTLVQIRVNDAELTKRLECFVNRKRDEINSQNVIDFKSSFVNSDIDLSDSCARTQSTIIKQEQSNCHLKVRRVNNRCGPQQMEMRPNYELELNKLMGSRDGQTDPFKEMRKSLPNSRLQAIESYMCLTTDNEENIFSRIKKVENRLLQLESISPEYRHFTKLEPSSMELPPPKKIRKKSYSVPELSAFIQKIKEGSEFA.

Residues 101-102 (HR), K117, and 124-126 (KKE) contribute to the substrate site.

Belongs to the MoaE family. MOCS2B subfamily. Heterotetramer; composed of 2 small (Mocs2A) and 2 large (Mocs2B) subunits.

The protein resides in the cytoplasm. It catalyses the reaction 2 [molybdopterin-synthase sulfur-carrier protein]-C-terminal-Gly-aminoethanethioate + cyclic pyranopterin phosphate + H2O = molybdopterin + 2 [molybdopterin-synthase sulfur-carrier protein]-C-terminal Gly-Gly + 2 H(+). It functions in the pathway cofactor biosynthesis; molybdopterin biosynthesis. Functionally, catalytic subunit of the molybdopterin synthase complex, a complex that catalyzes the conversion of precursor Z into molybdopterin. Acts by mediating the incorporation of 2 sulfur atoms from thiocarboxylated Mocs2A into precursor Z to generate a dithiolene group. The protein is Molybdopterin synthase catalytic subunit of Drosophila erecta (Fruit fly).